An 83-amino-acid polypeptide reads, in one-letter code: Protein L83L (83 aa).

Over residues M1 to G10 the composition is skewed to polar residues. A disordered region spans residues M1–E25. Over residues A14 to E25 the composition is skewed to basic and acidic residues.

The protein belongs to the asfivirus L83L family. As to quaternary structure, interacts with host IL1B.

It localises to the host cytoplasm. Its function is as follows. May subvert the host innate immune response by interacting with host IL1B and interfering with its function. In Ornithodoros (relapsing fever ticks), this protein is Protein L83L.